Consider the following 516-residue polypeptide: Probable cytochrome P450 9f2 (516 aa).

C460 is a binding site for heme.

This sequence belongs to the cytochrome P450 family. Heme is required as a cofactor.

It localises to the endoplasmic reticulum membrane. Its subcellular location is the microsome membrane. May be involved in the metabolism of insect hormones and in the breakdown of synthetic insecticides. The chain is Probable cytochrome P450 9f2 (Cyp9f2) from Drosophila melanogaster (Fruit fly).